The sequence spans 235 residues: Uridylate kinase (235 aa).

10 to 13 (KLSG) lines the ATP pocket. Gly-52 contributes to the UMP binding site. Residues Gly-53 and Arg-57 each contribute to the ATP site. UMP-binding positions include Asp-72 and 133 to 140 (TSNPYFST). 3 residues coordinate ATP: Thr-160, Tyr-166, and Asp-169.

It belongs to the UMP kinase family. In terms of assembly, homohexamer.

Its subcellular location is the cytoplasm. It carries out the reaction UMP + ATP = UDP + ADP. Its pathway is pyrimidine metabolism; CTP biosynthesis via de novo pathway; UDP from UMP (UMPK route): step 1/1. Its activity is regulated as follows. Inhibited by UTP. Catalyzes the reversible phosphorylation of UMP to UDP. The polypeptide is Uridylate kinase (Solibacter usitatus (strain Ellin6076)).